Reading from the N-terminus, the 494-residue chain is UDP-glucose 6-dehydrogenase (494 aa).

NAD(+) is bound by residues 11-16, Asp-36, Arg-41, and 89-93; these read GAGYVG and VNTPT. Positions 88-110 are disordered; it reads SVNTPTKTYGMGKGRAADLKYIE. At Lys-107 the chain carries N6-acetyllysine. Residues 129–135 are allosteric switch region; sequence KSTVPVR. 130 to 132 serves as a coordination point for NAD(+); that stretch reads STV. The Proton donor/acceptor role is filled by Glu-161. Residues 161–165, 220–224, Arg-260, and 267–273 contribute to the substrate site; these read EFLAE, KLAAN, and KASVGFG. Glu-165 contacts NAD(+). Lys-220 acts as the Proton donor/acceptor in catalysis. Catalysis depends on Cys-276, which acts as the Nucleophile. 276–279 is an NAD(+) binding site; it reads CFQK. An important for formation of active hexamer structure region spans residues 321–325; the sequence is SLFNT. 338–339 contributes to the substrate binding site; the sequence is FK. An NAD(+)-binding site is contributed by Arg-346. Residue Arg-442 coordinates substrate. The interval 466 to 494 is disordered; sequence VSSKRIPYAPSGEIPKFSLQDPPNKKPKV. Position 476 is a phosphoserine (Ser-476).

This sequence belongs to the UDP-glucose/GDP-mannose dehydrogenase family. In terms of assembly, homohexamer.

It carries out the reaction UDP-alpha-D-glucose + 2 NAD(+) + H2O = UDP-alpha-D-glucuronate + 2 NADH + 3 H(+). Its pathway is nucleotide-sugar biosynthesis; UDP-alpha-D-glucuronate biosynthesis; UDP-alpha-D-glucuronate from UDP-alpha-D-glucose: step 1/1. UDP-alpha-D-xylose (UDX) acts as a feedback inhibitor. It binds at the same site as the substrate, but functions as allosteric inhibitor by triggering a conformation change that disrupts the active hexameric ring structure and gives rise to an inactive, horseshoe-shaped hexamer. Its function is as follows. Catalyzes the formation of UDP-alpha-D-glucuronate, a constituent of complex glycosaminoglycans. Required for the biosynthesis of chondroitin sulfate and heparan sulfate. Required for embryonic development via its role in the biosynthesis of glycosaminoglycans. Required for proper brain and neuronal development. This Pongo abelii (Sumatran orangutan) protein is UDP-glucose 6-dehydrogenase (UGDH).